The chain runs to 383 residues: Acetylornithine deacetylase (383 aa).

His80 lines the Zn(2+) pocket. Residue Asp82 is part of the active site. Asp112 is a binding site for Zn(2+). Glu144 is a catalytic residue. Glu145, Glu169, and His355 together coordinate Zn(2+).

This sequence belongs to the peptidase M20A family. ArgE subfamily. Homodimer. It depends on Zn(2+) as a cofactor. Co(2+) is required as a cofactor. The cofactor is glutathione.

It localises to the cytoplasm. The catalysed reaction is N(2)-acetyl-L-ornithine + H2O = L-ornithine + acetate. It functions in the pathway amino-acid biosynthesis; L-arginine biosynthesis; L-ornithine from N(2)-acetyl-L-ornithine (linear): step 1/1. In terms of biological role, catalyzes the hydrolysis of the amide bond of N(2)-acetylated L-amino acids. Cleaves the acetyl group from N-acetyl-L-ornithine to form L-ornithine, an intermediate in L-arginine biosynthesis pathway, and a branchpoint in the synthesis of polyamines. In Escherichia coli (strain K12 / MC4100 / BW2952), this protein is Acetylornithine deacetylase.